Here is a 201-residue protein sequence, read N- to C-terminus: LexA repressor (201 aa).

A DNA-binding region (H-T-H motif) is located at residues 28–48; the sequence is RAEIAARLGFRSPNAAEEHLK. Active-site for autocatalytic cleavage activity residues include S118 and K155.

The protein belongs to the peptidase S24 family. As to quaternary structure, homodimer.

It carries out the reaction Hydrolysis of Ala-|-Gly bond in repressor LexA.. In terms of biological role, represses a number of genes involved in the response to DNA damage (SOS response), including recA and lexA. In the presence of single-stranded DNA, RecA interacts with LexA causing an autocatalytic cleavage which disrupts the DNA-binding part of LexA, leading to derepression of the SOS regulon and eventually DNA repair. The polypeptide is LexA repressor (Photorhabdus laumondii subsp. laumondii (strain DSM 15139 / CIP 105565 / TT01) (Photorhabdus luminescens subsp. laumondii)).